The primary structure comprises 262 residues: Ribose-5-phosphate isomerase A (262 aa).

Residues 33-36 (TGST), 89-92 (DGTD), and 102-105 (KGGG) contribute to the substrate site. The Proton acceptor role is filled by E111. Substrate is bound at residue K129.

It belongs to the ribose 5-phosphate isomerase family. As to quaternary structure, homodimer.

It carries out the reaction aldehydo-D-ribose 5-phosphate = D-ribulose 5-phosphate. It functions in the pathway carbohydrate degradation; pentose phosphate pathway; D-ribose 5-phosphate from D-ribulose 5-phosphate (non-oxidative stage): step 1/1. Functionally, catalyzes the reversible conversion of ribose-5-phosphate to ribulose 5-phosphate. This chain is Ribose-5-phosphate isomerase A, found in Jannaschia sp. (strain CCS1).